The chain runs to 634 residues: Glutamate--tRNA ligase (634 aa).

The short motif at 108–118 is the 'HIGH' region element; it reads PNPSGPLHIGH.

The protein belongs to the class-I aminoacyl-tRNA synthetase family. Glutamate--tRNA ligase type 2 subfamily.

It localises to the cytoplasm. The enzyme catalyses tRNA(Glu) + L-glutamate + ATP = L-glutamyl-tRNA(Glu) + AMP + diphosphate. Catalyzes the attachment of glutamate to tRNA(Glu) in a two-step reaction: glutamate is first activated by ATP to form Glu-AMP and then transferred to the acceptor end of tRNA(Glu). This is Glutamate--tRNA ligase from Methanoregula boonei (strain DSM 21154 / JCM 14090 / 6A8).